The sequence spans 122 residues: Large ribosomal subunit protein uL14 (122 aa).

The protein belongs to the universal ribosomal protein uL14 family. As to quaternary structure, part of the 50S ribosomal subunit. Forms a cluster with proteins L3 and L19. In the 70S ribosome, L14 and L19 interact and together make contacts with the 16S rRNA in bridges B5 and B8.

Its function is as follows. Binds to 23S rRNA. Forms part of two intersubunit bridges in the 70S ribosome. The polypeptide is Large ribosomal subunit protein uL14 (Nocardioides sp. (strain ATCC BAA-499 / JS614)).